The chain runs to 712 residues: Polyribonucleotide nucleotidyltransferase (712 aa).

2 residues coordinate Mg(2+): Asp-493 and Asp-499. Residues 560–619 (PRLLTFKVDPEDIGKIIGPGGKTVRGITEATGAKVDISDDGTITVSSSVGGQAEAARAMI) enclose the KH domain. One can recognise an S1 motif domain in the interval 629 to 697 (GQVYLGKVTR…HKGRINLTRL (69 aa)).

It belongs to the polyribonucleotide nucleotidyltransferase family. Mg(2+) serves as cofactor.

The protein resides in the cytoplasm. It catalyses the reaction RNA(n+1) + phosphate = RNA(n) + a ribonucleoside 5'-diphosphate. Involved in mRNA degradation. Catalyzes the phosphorolysis of single-stranded polyribonucleotides processively in the 3'- to 5'-direction. The protein is Polyribonucleotide nucleotidyltransferase of Synechococcus sp. (strain JA-2-3B'a(2-13)) (Cyanobacteria bacterium Yellowstone B-Prime).